Consider the following 329-residue polypeptide: Ribosomal RNA small subunit methyltransferase H (329 aa).

S-adenosyl-L-methionine contacts are provided by residues 47 to 49, aspartate 67, phenylalanine 93, aspartate 115, and glutamine 122; that span reads GGH.

This sequence belongs to the methyltransferase superfamily. RsmH family.

It localises to the cytoplasm. The enzyme catalyses cytidine(1402) in 16S rRNA + S-adenosyl-L-methionine = N(4)-methylcytidine(1402) in 16S rRNA + S-adenosyl-L-homocysteine + H(+). Specifically methylates the N4 position of cytidine in position 1402 (C1402) of 16S rRNA. This is Ribosomal RNA small subunit methyltransferase H from Blochmanniella pennsylvanica (strain BPEN).